Consider the following 155-residue polypeptide: DNA-binding protein inhibitor ID-1 (155 aa).

The bHLH domain occupies 53 to 105 (LPALLDEQQVNVLLYDMNGCYSRLKELVPTLPQNRKVSKVEILQHVIDYIRDL). The short motif at 98-111 (VIDYIRDLQLELNS) is the Nuclear export signal element.

Heterodimer with other HLH proteins. Interacts with COPS5, IFI204, GATA4 and NKX2-5. Interacts with CLOCK and BMAL1.

It is found in the cytoplasm. The protein localises to the nucleus. Transcriptional regulator (lacking a basic DNA binding domain) which negatively regulates the basic helix-loop-helix (bHLH) transcription factors by forming heterodimers and inhibiting their DNA binding and transcriptional activity. Implicated in regulating a variety of cellular processes, including cellular growth, senescence, differentiation, apoptosis, angiogenesis, and neoplastic transformation. Inhibits skeletal muscle and cardiac myocyte differentiation. Regulates the circadian clock by repressing the transcriptional activator activity of the CLOCK-BMAL1 heterodimer. The chain is DNA-binding protein inhibitor ID-1 (ID1) from Homo sapiens (Human).